The chain runs to 478 residues: Violaxanthin de-epoxidase, chloroplastic (478 aa).

Residues 388–453 (LVERLEKKVE…RELSKEEMDV (66 aa)) adopt a coiled-coil conformation.

Belongs to the calycin superfamily. Lipocalin family.

The protein resides in the plastid. The protein localises to the chloroplast thylakoid membrane. It catalyses the reaction all-trans-violaxanthin + 2 L-ascorbate = all-trans-zeaxanthin + 2 L-dehydroascorbate + 2 H2O. Functionally, part of the xanthophyll (or violaxanthin) cycle for controlling the concentration of zeaxanthin in chloroplasts. Catalyzes the two-step mono de-epoxidation reaction. Stereospecific for all-trans xanthophylls. Zeaxanthin induces the dissipation of excitation energy in the chlorophyll of the light-harvesting protein complex of photosystem II. The polypeptide is Violaxanthin de-epoxidase, chloroplastic (VDE1) (Nicotiana tabacum (Common tobacco)).